We begin with the raw amino-acid sequence, 690 residues long: Xylosyl- and glucuronyltransferase LARGE2 (690 aa).

Over 1–7 (MLPRGRP) the chain is Cytoplasmic. Residues 8-28 (RALGAALLLLLLLVVGFFLFG) form a helical; Signal-anchor for type II membrane protein membrane-spanning segment. The Lumenal portion of the chain corresponds to 29 to 690 (RDPEYGLGTT…TALQQSRSRA (662 aa)). Asn50 and Asn77 each carry an N-linked (GlcNAc...) asparagine glycan. The interval 67–342 (LHVAIVCAGY…FLGFDGKLLC (276 aa)) is xylosyltransferase activity. Mn(2+) is bound by residues Asp171 and Asp173. Residue Asn201 is glycosylated (N-linked (GlcNAc...) asparagine). The segment at 343–686 (RELFGCPNQF…LKYLTALQQS (344 aa)) is glucuronyltransferase activity. Mn(2+) contacts are provided by Asp491 and Asp493.

The protein in the C-terminal section; belongs to the glycosyltransferase 49 family. It in the N-terminal section; belongs to the glycosyltransferase 8 family. In terms of assembly, interacts with B4GAT1. Mn(2+) serves as cofactor.

It is found in the golgi apparatus membrane. It catalyses the reaction 3-O-[beta-D-GlcA-(1-&gt;3)-beta-D-Xyl-(1-&gt;4)-Rib-ol-P-Rib-ol-P-3-beta-D-GalNAc-(1-&gt;3)-beta-D-GlcNAc-(1-&gt;4)-(O-6-P-alpha-D-Man)]-Thr-[protein] + UDP-alpha-D-xylose = 3-O-[alpha-D-Xyl-(1-&gt;3)-beta-D-GlcA-(1-&gt;4)-beta-D-Xyl-(1-&gt;4)-Rib-ol-P-Rib-ol-P-3-beta-D-GalNAc-(1-&gt;3)-beta-D-GlcNAc-(1-&gt;4)-(O-6-P-alpha-D-Man)]-Thr-[protein] + UDP + H(+). The catalysed reaction is 3-O-{(1-&gt;[3)-alpha-D-Xyl-(1-&gt;3)-beta-D-GlcA-(1-&gt;](n)-4)-beta-D-Xyl-(1-&gt;4)-Rib-ol-P-Rib-ol-P-3-beta-D-GalNAc-(1-&gt;3)-beta-D-GlcNAc-(1-&gt;4)-O-6-P-alpha-D-Man}-L-Thr-[protein] + UDP-alpha-D-glucuronate = 3-O-{beta-D-GlcA-(1-&gt;[3)-alpha-D-Xyl-(1-&gt;3)-beta-D-GlcA-(1-&gt;](n)-4)-beta-D-Xyl-(1-&gt;4)-Rib-ol-P-Rib-ol-P-3-beta-D-GalNAc-(1-&gt;3)-beta-D-GlcNAc-(1-&gt;4)-O-6-P-alpha-D-Man}-L-Thr-[protein] + UDP + H(+). The enzyme catalyses 3-O-{beta-D-GlcA-(1-&gt;[3)-alpha-D-Xyl-(1-&gt;3)-beta-D-GlcA-(1-&gt;](n)-4)-beta-D-Xyl-(1-&gt;4)-Rib-ol-P-Rib-ol-P-3-beta-D-GalNAc-(1-&gt;3)-beta-D-GlcNAc-(1-&gt;4)-O-6-P-alpha-D-Man}-L-Thr-[protein] + UDP-alpha-D-xylose = 3-O-{(1-&gt;[3)-alpha-D-Xyl-(1-&gt;3)-beta-D-GlcA-(1-&gt;](n+1)-4)-beta-D-Xyl-(1-&gt;4)-Rib-ol-P-Rib-ol-P-3-beta-D-GalNAc-(1-&gt;3)-beta-D-GlcNAc-(1-&gt;4)-O-6-P-alpha-D-Man}-L-Thr-[protein] + UDP + H(+). It functions in the pathway protein modification; protein glycosylation. In terms of biological role, bifunctional glycosyltransferase with both alpha-1,3-xylosyltransferase and beta-1,3-glucuronyltransferase activities involved in the maturation of alpha-dystroglycan (DAG1) by glycosylation leading to DAG1 binding to laminin G-like domain-containing extracellular proteins with high affinity and in a phosphorylated-O-mannosyl trisaccharide dependent manner. Elongates the glucuronyl-beta-1,4-xylose-beta disaccharide primer structure by adding repeating units [-3-Xylose-alpha-1,3-GlcA-beta-1-] to produce a heteropolysaccharide. Supports the maturation of DAG1 more effectively than LARGE1. In addition, can modify both heparan sulfate (HS)- and chondroitin/dermatan sulfate (CS/DS)-proteoglycans (PGs), namely GPC4, with a glycosaminoglycan (GAG)-like polysaccharide composed of xylose and glucuronic acid to confer laminin binding. This Rattus norvegicus (Rat) protein is Xylosyl- and glucuronyltransferase LARGE2.